Reading from the N-terminus, the 426-residue chain is LIM/homeobox protein Lhx2 (426 aa).

The segment covering 14-24 (VIDEMDRRQER) has biased composition (basic and acidic residues). The disordered stretch occupies residues 14–42 (VIDEMDRRQERGSGISSAIDRGDTETTMP). LIM zinc-binding domains are found at residues 52-104 (CAGC…CKED) and 114-167 (CARC…CRLH). The segment at 248–268 (DAEHLDRDQPYPSSQKTKRMR) is disordered. Residues 264–323 (TKRMRTSFKHHQLRTMKSYFAINHNPDAKDLKQLAQKTGLTKRVLQVWFQNARAKFRRNL) constitute a DNA-binding region (homeobox). The short motif at 305 to 321 (KRVLQVWFQNARAKFRR) is the Nuclear localization signal element. The segment covering 326 to 354 (QENTGVDKTSDATLQTGTPSGPASELSNA) has biased composition (polar residues). Residues 326 to 370 (QENTGVDKTSDATLQTGTPSGPASELSNASLSPSSTPTTLTDLTS) are disordered. A compositionally biased stretch (low complexity) spans 355–370 (SLSPSSTPTTLTDLTS).

In terms of assembly, interacts (via LIM domains) with CITED2. Interacts with POU4F2. As to expression, found in discrete regions of the developing CNS, primarily in diencephalic and telencephalic structures and a subset of lymphoid tissues. Also found in embryonic spinal cord and fetal liver.

It localises to the nucleus. Its function is as follows. Acts as a transcriptional activator. Stimulates the promoter of the alpha-glycoprotein gene. Transcriptional regulatory protein involved in the control of cell differentiation in developing lymphoid and neural cell types. The sequence is that of LIM/homeobox protein Lhx2 (Lhx2) from Rattus norvegicus (Rat).